We begin with the raw amino-acid sequence, 625 residues long: MAPRARRRRQLPAPLLALCVLLVPLQVTLQVTPPCTQERHYEHLGRCCSRCEPGKYLSSKCTPTSDSVCLPCGPDEYLDTWNEEDKCLLHKVCDAGKALVAVDPGNHTAPRRCACTAGYHWNSDCECCRRNTECAPGFGAQHPLQLNKDTVCTPCLLGFFSDVFSSTDKCKPWTNCTLLGKLEAHQGTTESDVVCSSSMTLRRPPKEAQAYLPSLIVLLLFISVVVVAAIIFGVYYRKGGKALTANLWNWVNDACSSLSGNKESSGDRCAGSHSATSSQQEVCEGILLMTREEKMVPEDGAGVCGPVCAAGGPWAEVRDSRTFTLVSEVETQGDLSRKIPTEDEYTDRPSQPSTGSLLLIQQGSKSIPPFQEPLEVGENDSLSQCFTGTESTVDSEGCDFTEPPSRTDSMPVSPEKHLTKEIEGDSCLPWVVSSNSTDGYTGSGNTPGEDHEPFPGSLKCGPLPQCAYSMGFPSEAAASMAEAGVRPQDRADERGASGSGSSPSDQPPASGNVTGNSNSTFISSGQVMNFKGDIIVVYVSQTSQEGPGSAEPESEPVGRPVQEETLAHRDSFAGTAPRFPDVCATGAGLQEQGAPRQKDGTSRPVQEQGGAQTSLHTQGSGQCAE.

Residues 1–30 form the signal peptide; the sequence is MAPRARRRRQLPAPLLALCVLLVPLQVTLQ. Residues 31-214 lie on the Extracellular side of the membrane; sequence VTPPCTQERH…PKEAQAYLPS (184 aa). 9 disulfides stabilise this stretch: Cys-35/Cys-47, Cys-48/Cys-61, Cys-51/Cys-69, Cys-72/Cys-87, Cys-93/Cys-113, Cys-115/Cys-128, Cys-125/Cys-127, Cys-134/Cys-152, and Cys-155/Cys-170. 4 TNFR-Cys repeats span residues 35–69, 72–113, 115–152, and 155–195; these read CTQE…DSVC, CGPD…PRRC, CTAG…DTVC, and CLLG…DVVC. N-linked (GlcNAc...) asparagine glycosylation is present at Asn-106. The Na(+) site is built by Cys-134, Ala-135, Phe-138, Ser-161, and Val-163. N-linked (GlcNAc...) asparagine glycosylation occurs at Asn-175. Cysteines 176 and 195 form a disulfide. Residues 215 to 234 form a helical membrane-spanning segment; the sequence is LIVLLLFISVVVVAAIIFGV. The Cytoplasmic portion of the chain corresponds to 235–625; the sequence is YYRKGGKALT…HTQGSGQCAE (391 aa). 3 disordered regions span residues 331 to 356, 388 to 413, and 479 to 524; these read TQGD…STGS, GTES…MPVS, and SMAE…FISS. A compositionally biased stretch (low complexity) spans 499-511; that stretch reads SGSSPSDQPPASG. Positions 512–524 are enriched in polar residues; that stretch reads NVTGNSNSTFISS. The interval 532–537 is required for interaction with EEIG1 and osteoclast differentiation; that stretch reads GDIIVV. A disordered region spans residues 542-625; that stretch reads TSQEGPGSAE…HTQGSGQCAE (84 aa). Positions 543-558 are enriched in low complexity; that stretch reads SQEGPGSAEPESEPVG. The span at 561–571 shows a compositional bias: basic and acidic residues; sequence VQEETLAHRDS. Ser-571 bears the Phosphoserine mark. Residues 603–625 show a composition bias toward polar residues; it reads RPVQEQGGAQTSLHTQGSGQCAE.

Binds to the clefts between the subunits of the TNFSF11 ligand trimer to form a heterohexamer. Part of a complex composed of EEIG1, TNFRSF11A/RANK, PLCG2, GAB2, TEC and BTK; complex formation increases in the presence of TNFSF11/RANKL. Interacts with TRAF1, TRAF2, TRAF3, TRAF5 and TRAF6. Interacts (via cytoplasmic domain) with GAB2. Interacts (via cytoplasmic domain); with EEIG1 (via N-terminus); when in the presence of TNFSF11/RANKL. In terms of tissue distribution, ubiquitous expression with high levels in trabecular bone, thymus, small intestine, lung, brain and kidney. Weakly expressed in spleen and bone marrow.

It localises to the cell membrane. The protein localises to the membrane raft. In terms of biological role, receptor for TNFSF11/RANKL/TRANCE/OPGL; essential for RANKL-mediated osteoclastogenesis. Its interaction with EEIG1 promotes osteoclastogenesis via facilitating the transcription of NFATC1 and activation of PLCG2. Involved in the regulation of interactions between T-cells and dendritic cells. This is Tumor necrosis factor receptor superfamily member 11A (Tnfrsf11a) from Mus musculus (Mouse).